We begin with the raw amino-acid sequence, 489 residues long: UDP-N-acetylmuramate--L-alanine ligase (489 aa).

128 to 134 (GTHGKTT) lines the ATP pocket.

It belongs to the MurCDEF family.

The protein localises to the cytoplasm. The catalysed reaction is UDP-N-acetyl-alpha-D-muramate + L-alanine + ATP = UDP-N-acetyl-alpha-D-muramoyl-L-alanine + ADP + phosphate + H(+). It participates in cell wall biogenesis; peptidoglycan biosynthesis. In terms of biological role, cell wall formation. The sequence is that of UDP-N-acetylmuramate--L-alanine ligase from Shewanella sediminis (strain HAW-EB3).